An 833-amino-acid polypeptide reads, in one-letter code: MNKSKVTSKKVVAETKVVNNKKSEPIAVSEPKKSVSKPTTTATTTVSKSPVSTITTQILGKRTKTPVVRDEENEDEKLDFGNIDLNNYNSEDDEDYESEEDDEGDDEEDVESQNGSIVYSESEEEEEGGINKALLEAEESLVEYQSEDDSGSISSKSSSSTTTTTTTTKKTNNDEEEVAPNKQWTNDPNQFYDSDDSSEDESLVNRIGNIPLEWYDDYDHIGYDVDGNKIMKTESMKDSIDKYLDQQDPNFWRTVYDKVNDKKVVLSDDDMALLKSIQNKHFIPGYDPYADWYDSGNNHPDSIHPMHNAPVPKRSFFPNGTDEEREIRRLTKAIRMGWIKLNKKGKKGEKDKKDGNFDLWADEGEEKEKTKGIRRIAAPKQKLPGNVESFNPPEEYLLNENELKAWHLMDPRERPHNFIPQKYQSLRQLPIYNKLIKERFERCLDLYLCPRTTRVKQFTKDPTKFLPTLPKPQDLRPFPSHEEIQFLGHKARVRSISISPNGQWLASGSDDCTIKIWEVSSTRCLYSLEVESEVQTVAWNPNPIYNILAVGYSNKIIIITPPLFGTQTEHSPETEKILTKPPTDSSTEQQQNKSVNWYQVTGADKAKLLEKGVRIEIHHPFTVKNLTWHYKGDYFSTTSPEEGTRSVKIHHLSKRATQSPFRKSKTPNQVTRFHPNKPIFFVADQNIIRVYDLMKQELIKKLITGCRYISSIDIHPQGDNVIMGGYDKKVCWFDLDLSVRPYKVLNYHKMAVRKVIYHPTLPLFASCSDDLSIHVFHGMVYDDLLQNALIVPLKILKTHESINDLGVLDIVFHPKQPWIFSSGADSTIRLYTN.

The tract at residues 20–202 (NKKSEPIAVS…DSDDSSEDES (183 aa)) is disordered. Positions 36-56 (SKPTTTATTTVSKSPVSTITT) are enriched in low complexity. Acidic residues-rich tracts occupy residues 90 to 111 (SEDDEDYESEEDDEGDDEEDVE) and 136 to 150 (EAEESLVEYQSEDDS). Over residues 154–170 (SSKSSSSTTTTTTTTKK) the composition is skewed to low complexity. Residues 182 to 192 (KQWTNDPNQFY) are compositionally biased toward polar residues. Residues 193 to 202 (DSDDSSEDES) are compositionally biased toward acidic residues. 3 WD repeats span residues 331 to 370 (TKAIRMGWIKLNKKGKKGEKDKKDGNFDLWADEGEEKEKT), 488 to 527 (GHKARVRSISISPNGQWLASGSDDCTIKIWEVSSTRCLYS), and 529 to 569 (EVES…TQTE). Residues 568–592 (TEHSPETEKILTKPPTDSSTEQQQN) form a disordered region. Over residues 582-592 (PTDSSTEQQQN) the composition is skewed to polar residues. WD repeat units lie at residues 618-660 (HHPF…TQSP), 663-701 (KSKTPNQVTRFHPNKPIFFVADQNIIRVYDLMKQELIKK), 704-743 (TGCRYISSIDIHPQGDNVIMGGYDKKVCWFDLDLSVRPYK), 747-786 (YHKMAVRKVIYHPTLPLFASCSDDLSIHVFHGMVYDDLLQ), and 802-833 (INDLGVLDIVFHPKQPWIFSSGADSTIRLYTN).

Belongs to the WD repeat BOP1/ERB1 family.

The protein resides in the nucleus. Its subcellular location is the nucleolus. It is found in the nucleoplasm. In terms of biological role, required for maturation of ribosomal RNAs and formation of the large ribosomal subunit. This is Ribosome biogenesis protein BOP1 homolog from Dictyostelium discoideum (Social amoeba).